Reading from the N-terminus, the 444-residue chain is Tubulin beta chain (444 aa).

Q11, E68, S137, G141, T142, G143, N203, and N225 together coordinate GTP. E68 provides a ligand contact to Mg(2+). Residues 424–444 are disordered; sequence QDATAEEEGEFDEDEEMDEMM. Residues 427 to 444 show a composition bias toward acidic residues; the sequence is TAEEEGEFDEDEEMDEMM.

This sequence belongs to the tubulin family. In terms of assembly, dimer of alpha and beta chains. A typical microtubule is a hollow water-filled tube with an outer diameter of 25 nm and an inner diameter of 15 nM. Alpha-beta heterodimers associate head-to-tail to form protofilaments running lengthwise along the microtubule wall with the beta-tubulin subunit facing the microtubule plus end conferring a structural polarity. Microtubules usually have 13 protofilaments but different protofilament numbers can be found in some organisms and specialized cells. The cofactor is Mg(2+).

The protein localises to the cytoplasm. Its subcellular location is the cytoskeleton. Tubulin is the major constituent of microtubules, a cylinder consisting of laterally associated linear protofilaments composed of alpha- and beta-tubulin heterodimers. Microtubules grow by the addition of GTP-tubulin dimers to the microtubule end, where a stabilizing cap forms. Below the cap, tubulin dimers are in GDP-bound state, owing to GTPase activity of alpha-tubulin. This is Tubulin beta chain from Achlya klebsiana.